The chain runs to 380 residues: Methenyltetrahydrofolate synthase domain-containing protein (380 aa).

Over residues 245 to 258 (EEQAGKDVTLRDGP) the composition is skewed to basic and acidic residues. Disordered stretches follow at residues 245–283 (EEQA…PLSS) and 361–380 (LVGS…IAGP). The 74-residue stretch at 282-355 (SSVQIGNLPR…NTVRVVLARQ (74 aa)) folds into the RRM domain.

This Bos taurus (Bovine) protein is Methenyltetrahydrofolate synthase domain-containing protein (MTHFSD).